Here is a 181-residue protein sequence, read N- to C-terminus: ADP-ribosylation factor 1 (181 aa).

G2 carries the post-translational modification N-acetylglycine; alternate. A lipid anchor (N-myristoyl glycine; alternate) is attached at G2. The important for the stable binding to the membranes stretch occupies residues 3–16; sequence NIFANLFKGLFGKK. GTP-binding positions include 24 to 32, 126 to 129, and A160; these read GLDAAGKTT and NKQD.

It belongs to the small GTPase superfamily. Arf family. In terms of assembly, interacts (when activated) with GGA1, GGA2 and GGA3; the interaction is required for proper subcellular location of GGA1, GGA2 and GGA3. Interacts with ARHGAP21, ASAP2, GGA1, HERC1, PRKCABP, PIP5K1B, TMED2, PSCD2, TMED10 and GRIA2. Interacts with ARFGAP1, which hydrolyzes GTP and thus, regulates its function. Interacts with PI4KB in the Golgi complex. Interacts with NCS1/FREQ in the Golgi and at the plasma membrane. Interacts with PLEKHA3. Interacts with PLEKHA8; the interaction, together with phosphatidylinositol 4-phosphate binding, is required for FAPP2-mediated glucosylceramide transfer activity. Interacts (activated) with PICK1 (via PDZ domain); the interaction blocks Arp2/3 complex inhibition. Interacts with IQSEC1. Interacts with C9orf72.

It is found in the golgi apparatus membrane. It localises to the synapse. The protein resides in the synaptosome. The protein localises to the postsynaptic density. It catalyses the reaction GTP + H2O = GDP + phosphate + H(+). Alternates between an inactive GDP-bound form and an active GTP-bound form. Activated by guanine nucleotide-exchange factors (GEFs) and inactivated by GTPase-activating proteins (GAPs). Small GTPase involved in protein trafficking between different compartments. Modulates vesicle budding and uncoating within the Golgi complex. In its GTP-bound form, triggers the recruitment of coatomer proteins to the Golgi membrane. The hydrolysis of ARF1-bound GTP, which is mediated by ARFGAPs proteins, is required for dissociation of coat proteins from Golgi membranes and vesicles. The GTP-bound form interacts with PICK1 to limit PICK1-mediated inhibition of Arp2/3 complex activity; the function is linked to AMPA receptor (AMPAR) trafficking, regulation of synaptic plasticity of excitatory synapses and spine shrinkage during long-term depression (LTD). Plays a key role in the regulation of intestinal stem cells and gut microbiota, and is essential for maintaining intestinal homeostasis. Also plays a critical role in mast cell expansion but not in mast cell maturation by facilitating optimal mTORC1 activation. The polypeptide is ADP-ribosylation factor 1 (ARF1) (Bos taurus (Bovine)).